A 376-amino-acid chain; its full sequence is MANLRIALVAGEASGDILGAGLMRALKAQHPAVEFIGVGGPLMQAEGLTSYFPMERLSVMGLVEVLGRLRELLKRRKDLIATLIAEKPDVFIGIDAPDFNLNIELKLRQAGIKTVHYVSPSVWAWRQKRVLKIREGCDLMLTLLPFEARFYEEKGVPVRFVGHTLADTIPLEADRAAARAELGLPDGPLVALMPGSRGGEVSRLGALFLDTAQRLRAMRPGVRFVIPCANPERRAQLEELLAGRDLPVTLLDGKSHLALAACNAVLIASGTATLEALLYKRPMVVAYRLAPLTFWILKRMVKSPYVSLPNLLAQRLLVPELLQDDATVEALAQTLSPLIDGGEEQTRGFDEIHRTLRLDASNQAADAVLNLIGQTR.

The protein belongs to the LpxB family.

The enzyme catalyses a lipid X + a UDP-2-N,3-O-bis[(3R)-3-hydroxyacyl]-alpha-D-glucosamine = a lipid A disaccharide + UDP + H(+). Its pathway is bacterial outer membrane biogenesis; LPS lipid A biosynthesis. Functionally, condensation of UDP-2,3-diacylglucosamine and 2,3-diacylglucosamine-1-phosphate to form lipid A disaccharide, a precursor of lipid A, a phosphorylated glycolipid that anchors the lipopolysaccharide to the outer membrane of the cell. This is Lipid-A-disaccharide synthase from Pseudomonas fluorescens (strain Pf0-1).